Here is a 109-residue protein sequence, read N- to C-terminus: Nucleoid-associated protein Plut_1285 (109 aa).

Belongs to the YbaB/EbfC family. Homodimer.

It is found in the cytoplasm. Its subcellular location is the nucleoid. In terms of biological role, binds to DNA and alters its conformation. May be involved in regulation of gene expression, nucleoid organization and DNA protection. This Chlorobium luteolum (strain DSM 273 / BCRC 81028 / 2530) (Pelodictyon luteolum) protein is Nucleoid-associated protein Plut_1285.